The following is a 372-amino-acid chain: Aminomethyltransferase (372 aa).

It belongs to the GcvT family. The glycine cleavage system is composed of four proteins: P, T, L and H.

It carries out the reaction N(6)-[(R)-S(8)-aminomethyldihydrolipoyl]-L-lysyl-[protein] + (6S)-5,6,7,8-tetrahydrofolate = N(6)-[(R)-dihydrolipoyl]-L-lysyl-[protein] + (6R)-5,10-methylene-5,6,7,8-tetrahydrofolate + NH4(+). Its function is as follows. The glycine cleavage system catalyzes the degradation of glycine. The chain is Aminomethyltransferase from Burkholderia cenocepacia (strain ATCC BAA-245 / DSM 16553 / LMG 16656 / NCTC 13227 / J2315 / CF5610) (Burkholderia cepacia (strain J2315)).